The primary structure comprises 648 residues: FAD-binding monooxygenase trt3 (648 aa).

Residues 118–121 (TWYW), 130–131 (DI), and Y136 each bind FAD. 128–130 (MCD) contacts NADP(+). NADP(+) is bound by residues 274–280 (TGSTAVQ) and 297–298 (RT).

The protein belongs to the FAD-binding monooxygenase family. FAD is required as a cofactor.

Its pathway is secondary metabolite biosynthesis; terpenoid biosynthesis. In terms of biological role, FAD-binding monooxygenase; part of the gene cluster that mediates the biosynthesis of terretonin, a fungal meroterpenoid that acts as a mycotoxin. The first step of the pathway is the synthesis of 3,5-dimethylorsellinic acid (DMOA) by the polyketide synthase trt4. DMOA is then prenylated into farnesyl-DMOA by the polyprenyl transferase trt2. Methylation by the methyltransferase trt5 then leads to farnesyl-DMOA methyl ester which is further subject to epoxidation by the FAD-dependent monooxygenase trt8 to yield epoxyfarnesyl-DMOA methyl ester. Cyclization of epoxyfarnesyl-DMOA methyl ester by the terpene cyclase trt1 leads to a tetracycle intermediate which is in turn converted to preterretonin. Dehydrogenase trt9 comes next to transform preterretonin to preterrenoid. The FAD-dependent monooxygenase trt3 is then required for the C-hydroxylation at C16 of preterrenoid to yield terrenoid. The cytochrome P450 trt6 catalyzes three successive oxidations to transform terrenoid into an unstable intermediate, which then undergoes the D-ring expansion and unusual rearrangement of the methoxy group to afford the core skeleton of terretonin. Trt14 catalyzes the D-ring expansion of terretonin involving intramolecular methoxy rearrangement as well as the hydrolysis of the expanded D-ring and the methyl ester moiety. Finally, the nonheme iron-dependent dioxygenase trt7 accomplishes the last two oxidation reactions steps to complete the biosynthesis of terretonin. Terretonin C is produced via spontaneous decarboxylation of the terretonin precursor. Another shunt product of the terretonin biosynthesis is dihydrofarnesyl-DMOA, derived from epoxyfarnesyl-DMOA through hydrolysis of the epoxide. The polypeptide is FAD-binding monooxygenase trt3 (Aspergillus terreus (strain NIH 2624 / FGSC A1156)).